Here is a 262-residue protein sequence, read N- to C-terminus: Ribosomal RNA small subunit methyltransferase A (262 aa).

S-adenosyl-L-methionine is bound by residues His-16, Leu-18, Gly-43, Glu-64, Asp-89, and Asn-109.

It belongs to the class I-like SAM-binding methyltransferase superfamily. rRNA adenine N(6)-methyltransferase family. RsmA subfamily.

It is found in the cytoplasm. The catalysed reaction is adenosine(1518)/adenosine(1519) in 16S rRNA + 4 S-adenosyl-L-methionine = N(6)-dimethyladenosine(1518)/N(6)-dimethyladenosine(1519) in 16S rRNA + 4 S-adenosyl-L-homocysteine + 4 H(+). Functionally, specifically dimethylates two adjacent adenosines (A1518 and A1519) in the loop of a conserved hairpin near the 3'-end of 16S rRNA in the 30S particle. May play a critical role in biogenesis of 30S subunits. This chain is Ribosomal RNA small subunit methyltransferase A, found in Xanthomonas campestris pv. campestris (strain B100).